The following is a 392-amino-acid chain: Succinate--CoA ligase [ADP-forming] subunit beta (392 aa).

Residues 9–244 (KALLAQYGVG…LSEEESSEIE (236 aa)) enclose the ATP-grasp domain. ATP-binding positions include K46, 53-55 (GRG), E99, L102, and E107. Mg(2+)-binding residues include N199 and D213. Substrate-binding positions include N264 and 321–323 (GIV).

The protein belongs to the succinate/malate CoA ligase beta subunit family. Heterotetramer of two alpha and two beta subunits. The cofactor is Mg(2+).

It carries out the reaction succinate + ATP + CoA = succinyl-CoA + ADP + phosphate. The enzyme catalyses GTP + succinate + CoA = succinyl-CoA + GDP + phosphate. The protein operates within carbohydrate metabolism; tricarboxylic acid cycle; succinate from succinyl-CoA (ligase route): step 1/1. In terms of biological role, succinyl-CoA synthetase functions in the citric acid cycle (TCA), coupling the hydrolysis of succinyl-CoA to the synthesis of either ATP or GTP and thus represents the only step of substrate-level phosphorylation in the TCA. The beta subunit provides nucleotide specificity of the enzyme and binds the substrate succinate, while the binding sites for coenzyme A and phosphate are found in the alpha subunit. The chain is Succinate--CoA ligase [ADP-forming] subunit beta from Wolinella succinogenes (strain ATCC 29543 / DSM 1740 / CCUG 13145 / JCM 31913 / LMG 7466 / NCTC 11488 / FDC 602W) (Vibrio succinogenes).